The primary structure comprises 282 residues: sn-glycerol-3-phosphate transport system permease protein UgpE (282 aa).

6 consecutive transmembrane segments (helical) span residues 14–34 (LILILGIIIVAFPIYYTFVAS), 86–106 (MAIAVGKIIISFMSAFAIVFF), 112–132 (MFFFWMIFITLMLPVEVRILP), 146–168 (YAGLTLPLMASATATFLFRQFFL), 201–221 (IAALFVILFIYGWTQYLWPLL), and 248–268 (WNYVMVTAILAIIPLILVVVL). Positions 78–269 (LWNSFVVAMA…IPLILVVVLM (192 aa)) constitute an ABC transmembrane type-1 domain.

Belongs to the binding-protein-dependent transport system permease family. As to quaternary structure, the complex is composed of two ATP-binding proteins (UgpC), two transmembrane proteins (UgpA and UgpE) and a solute-binding protein (UgpB).

Its subcellular location is the cell inner membrane. In terms of biological role, part of the ABC transporter complex UgpBAEC involved in sn-glycerol-3-phosphate (G3P) import. Probably responsible for the translocation of the substrate across the membrane. The protein is sn-glycerol-3-phosphate transport system permease protein UgpE (ugpE) of Brucella abortus (strain 2308).